We begin with the raw amino-acid sequence, 344 residues long: 5,10-methenyltetrahydromethanopterin hydrogenase (344 aa).

The protein belongs to the HMD family. Homotetramer.

It carries out the reaction 5,10-methenyl-5,6,7,8-tetrahydromethanopterin + H2 = 5,10-methylenetetrahydromethanopterin + H(+). It functions in the pathway one-carbon metabolism; methanogenesis from CO(2); 5,10-methylene-5,6,7,8-tetrahydromethanopterin from 5,10-methenyl-5,6,7,8-tetrahydromethanopterin (hydrogen route): step 1/1. With respect to regulation, activity requires salt; 100 mM sodium or potassium salts of chloride, phosphate or sulfate are equally effective. Inactivated by O(2). Catalyzes the reversible reduction of methenyl-H(4)MPT(+) to methylene-H(4)MPT. The protein is 5,10-methenyltetrahydromethanopterin hydrogenase of Methanothermobacter marburgensis (strain ATCC BAA-927 / DSM 2133 / JCM 14651 / NBRC 100331 / OCM 82 / Marburg) (Methanobacterium thermoautotrophicum).